The chain runs to 353 residues: MTMAVPSRARVYADVNSQRPREYWDYESYVVDWGNQEDYQLVRKLGRGKYSEVFEAINITNNEKCVVKILKPVKKKKIKREIKILENLRGGTNIITLQAVVKDPVSRTPALIFEHVNNTDFKQLYQTLSDYDIRYYLYELLKALDYCHSMGIMHRDVKPHNVMIDHDHRKLRLIDWGLAEFYHPGQDYNVRVASRYFKGPELLVDYQMYDYSLDMWSLGCMLASMIFRKEPFFHGHDNYDQLVRIAKVLGTEELFEYLDKYHIELDPRFNDILGRHSRKRWERFVHSENQHLVSPEALDFLDRLLRYDHYERYTAREAMDHPYFYPIVKEQGRMVSSNSPTPNALQGPISTTE.

The Protein kinase domain maps to 39–324; the sequence is YQLVRKLGRG…AREAMDHPYF (286 aa). ATP-binding positions include 45 to 53 and Lys-68; that span reads LGRGKYSEV. Asp-156 (proton acceptor) is an active-site residue. Residues 334-353 are disordered; it reads MVSSNSPTPNALQGPISTTE.

The protein belongs to the protein kinase superfamily. Ser/Thr protein kinase family. CK2 subfamily. Tetramer of two alpha and two beta chains.

The catalysed reaction is L-seryl-[protein] + ATP = O-phospho-L-seryl-[protein] + ADP + H(+). The enzyme catalyses L-threonyl-[protein] + ATP = O-phospho-L-threonyl-[protein] + ADP + H(+). Casein kinases are operationally defined by their preferential utilization of acidic proteins such as caseins as substrates. The alpha chain contains the catalytic site. May participate in Wnt signaling. This is Casein kinase II subunit alpha from Spodoptera frugiperda (Fall armyworm).